Reading from the N-terminus, the 554-residue chain is Zinc finger protein syd-9 (554 aa).

3 C2H2-type zinc fingers span residues L20 to H43, F65 to H87, and Y93 to H116. Disordered stretches follow at residues K136–P158, S298–A319, and A342–P383. Low complexity predominate over residues N142–P158. Composition is skewed to polar residues over residues P351–C360 and S370–S379. The C2H2-type 4 zinc finger occupies L387–H410. A disordered region spans residues R516–L554. Positions S544–L554 are enriched in basic and acidic residues.

In terms of tissue distribution, expressed mainly in body wall muscles and ventral cord motoneurons.

It localises to the nucleus. It is found in the nucleus speckle. Plays a role in regulating synaptic function, probably by modulation of endocytosis. May be dispensable in muscle for normal locomotion. May be involved in post-transcriptional mRNA processing, in parallel with unc-75. This chain is Zinc finger protein syd-9, found in Caenorhabditis elegans.